The following is a 500-amino-acid chain: Ephrin type-B receptor 3 (500 aa).

The 64-residue stretch at 1–64 folds into the Fibronectin type-III domain; the sequence is PLLVLDLIIQ…NPVDFSTSLY (64 aa). The Extracellular segment spans residues 1 to 113; that stretch reads PLLVLDLIIQ…ERSVQDLLPL (113 aa). The segment at 76–103 is disordered; the sequence is HLRRREELTTTTTGLKSREERFQKSDDP. Over residues 91–103 the composition is skewed to basic and acidic residues; sequence KSREERFQKSDDP. The helical transmembrane segment at 114-134 threads the bilayer; it reads IVGSASAGFVVILAMIVIAVV. Residues 135 to 500 lie on the Cytoplasmic side of the membrane; the sequence is CLRRQRTGSE…QMSQTLPIRV (366 aa). Tyr-168 carries the post-translational modification Phosphotyrosine; by autocatalysis. The region spanning 187-450 is the Protein kinase domain; the sequence is VKIEEVIGAG…QIVSTLDKFL (264 aa). ATP is bound by residues 193–201 and Lys-219; that span reads IGAGEFGEV. The active-site Proton acceptor is the Asp-312. In terms of domain architecture, SAM spans 421–500; it reads LHQLMLECWV…QMSQTLPIRV (80 aa). The short motif at 498 to 500 is the PDZ-binding element; the sequence is IRV.

It belongs to the protein kinase superfamily. Tyr protein kinase family. Ephrin receptor subfamily. In terms of assembly, heterotetramer upon binding of the ligand. The heterotetramer is composed of an ephrin dimer and a receptor dimer. Oligomerization is probably required to induce biological responses. Phosphorylated. Autophosphorylates upon ligand-binding. Autophosphorylation on Tyr-168 is required for interaction with SH2 domain-containing proteins. In terms of tissue distribution, widely expressed in the developing nervous system.

The protein localises to the cell membrane. The protein resides in the cell projection. Its subcellular location is the dendrite. The enzyme catalyses L-tyrosyl-[protein] + ATP = O-phospho-L-tyrosyl-[protein] + ADP + H(+). Receptor tyrosine kinase which binds promiscuously transmembrane ephrin-B family ligands residing on adjacent cells, leading to contact-dependent bidirectional signaling into neighboring cells. The signaling pathway downstream of the receptor is referred to as forward signaling while the signaling pathway downstream of the ephrin ligand is referred to as reverse signaling. Generally has an overlapping and redundant function with EPHB2. Like EPHB2, functions in axon guidance during development. In addition to its role in axon guidance also plays an important redundant role with other ephrin-B receptors in development and maturation of dendritic spines and the formation of excitatory synapses. May control other aspects of development through regulation of cell migration and positioning. May play a role in early pattern formation within the developing nervous system. The chain is Ephrin type-B receptor 3 (ephb3) from Danio rerio (Zebrafish).